Consider the following 430-residue polypeptide: Aspartate aminotransferase, mitochondrial (430 aa).

Residues 1–29 (MALLHSGRVLSGVASAFHPGLAAAASARA) constitute a mitochondrion transit peptide. At Thr-48 the chain carries Phosphothreonine. An N6-acetyllysine modification is found at Lys-59. Gly-65 contributes to the substrate binding site. An N6-acetyllysine; alternate modification is found at Lys-73. N6-succinyllysine; alternate is present on Lys-73. The residue at position 82 (Lys-82) is an N6-acetyllysine. Lys-90 is modified (N6-acetyllysine; alternate). N6-succinyllysine; alternate is present on Lys-90. 3'-nitrotyrosine; alternate is present on Tyr-96. Tyr-96 carries the phosphotyrosine; alternate modification. Lys-107, Lys-122, and Lys-159 each carry N6-acetyllysine; alternate. N6-succinyllysine; alternate occurs at positions 107, 122, and 159. Trp-162 lines the substrate pocket. Lys-185 carries the post-translational modification N6-acetyllysine; alternate. An N6-succinyllysine; alternate modification is found at Lys-185. Asn-215 serves as a coordination point for substrate. Position 227 is an N6-succinyllysine (Lys-227). Residue Lys-234 is modified to N6-acetyllysine. N6-acetyllysine; alternate is present on residues Lys-279 and Lys-296. The residue at position 279 (Lys-279) is an N6-(pyridoxal phosphate)lysine; alternate. Lys-296 carries the N6-succinyllysine; alternate modification. N6-acetyllysine is present on Lys-302. Residue Lys-309 is modified to N6-acetyllysine; alternate. Lys-309 is modified (N6-succinyllysine; alternate). At Arg-313 the chain carries Asymmetric dimethylarginine. The residue at position 345 (Lys-345) is an N6-acetyllysine. An N6-acetyllysine; alternate modification is found at Lys-363. N6-succinyllysine; alternate is present on Lys-363. N6-acetyllysine is present on residues Lys-364 and Lys-387. Lys-396 and Lys-404 each carry N6-acetyllysine; alternate. N6-succinyllysine; alternate is present on residues Lys-396 and Lys-404. Residue Arg-407 participates in substrate binding.

It belongs to the class-I pyridoxal-phosphate-dependent aminotransferase family. In terms of assembly, homodimer. Pyridoxal 5'-phosphate is required as a cofactor.

The protein localises to the mitochondrion matrix. The protein resides in the cell membrane. It catalyses the reaction L-aspartate + 2-oxoglutarate = oxaloacetate + L-glutamate. The enzyme catalyses L-kynurenine + 2-oxoglutarate = kynurenate + L-glutamate + H2O. In terms of biological role, catalyzes the irreversible transamination of the L-tryptophan metabolite L-kynurenine to form kynurenic acid (KA). As a member of the malate-aspartate shuttle, it has a key role in the intracellular NAD(H) redox balance. Is important for metabolite exchange between mitochondria and cytosol, and for amino acid metabolism. Facilitates cellular uptake of long-chain free fatty acids. This chain is Aspartate aminotransferase, mitochondrial (GOT2), found in Sus scrofa (Pig).